Consider the following 258-residue polypeptide: C4b-binding protein beta chain (258 aa).

The N-terminal stretch at 1–15 (MLCLVVCCLIWLISA) is a signal peptide. Residues 18-75 (GSCSEPPPVNNSVFVGKETEEQILGIYLCIKGYHLVGKKSLVFDPSKEWNSTLPECLL) enclose the Sushi 1; atypical; lacks a Cys domain. N-linked (GlcNAc...) asparagine glycosylation is found at Asn-27, Asn-67, Asn-89, Asn-95, and Asn-114. Cystine bridges form between Cys-46–Cys-73, Cys-78–Cys-118, Cys-104–Cys-131, Cys-136–Cys-176, and Cys-162–Cys-188. 2 consecutive Sushi domains span residues 76 to 133 (GHCP…ICRS) and 134 to 190 (RDCE…TCES). N-linked (GlcNAc...) asparagine glycosylation is present at Asn-218.

Disulfide-linked complex of alpha and beta chains.

The protein localises to the secreted. Functionally, controls the classical pathway of complement activation. It binds as a cofactor to C3b/C4b inactivator (C3bINA), which then hydrolyzes the complement fragment C4b. It also accelerates the degradation of the C4bC2a complex (C3 convertase) by dissociating the complement fragment C2a. It also interacts with anticoagulant protein S and with serum amyloid P component. The sequence is that of C4b-binding protein beta chain (C4bpb) from Rattus norvegicus (Rat).